The sequence spans 194 residues: MEPLGLILVAVALGTDAFSLATGLALGGFRGRQAWLFAGTVGLFHIFMPLAGLYLGLLLGRLLGKVAAIIGALVLATMGTLMLWEAYNNRRQGGSMVGQVLRVIPGRGGVLGGVMAILFMAGSVSLDALSVGFGLGAISVNVPLTVLTMGFIAATMTALGLLAGRRLGSFFGNRAELAGGLILVAIGLKMLVGV.

The next 6 helical transmembrane spans lie at Leu-6–Leu-26, Trp-35–Leu-55, Val-66–Ala-86, Gly-109–Leu-129, Val-142–Leu-162, and Arg-174–Val-194.

It belongs to the MntP (TC 9.B.29) family.

It is found in the cell membrane. Functionally, probably functions as a manganese efflux pump. This Moorella thermoacetica (strain ATCC 39073 / JCM 9320) protein is Putative manganese efflux pump MntP.